Reading from the N-terminus, the 502-residue chain is Arginine decarboxylase (502 aa).

Lys42 is modified (N6-(pyridoxal phosphate)lysine). 226–236 (IDIGGGLGIDY) lines the substrate pocket.

It belongs to the Orn/Lys/Arg decarboxylase class-II family. SpeA subfamily. Pyridoxal 5'-phosphate serves as cofactor. Requires Mg(2+) as cofactor.

The catalysed reaction is L-arginine + H(+) = agmatine + CO2. It functions in the pathway amine and polyamine biosynthesis; agmatine biosynthesis; agmatine from L-arginine: step 1/1. In Solanum lycopersicum (Tomato), this protein is Arginine decarboxylase.